The following is a 196-amino-acid chain: Translation initiation factor IF-3 (196 aa).

It belongs to the IF-3 family. As to quaternary structure, monomer.

It is found in the cytoplasm. In terms of biological role, IF-3 binds to the 30S ribosomal subunit and shifts the equilibrium between 70S ribosomes and their 50S and 30S subunits in favor of the free subunits, thus enhancing the availability of 30S subunits on which protein synthesis initiation begins. In Wigglesworthia glossinidia brevipalpis, this protein is Translation initiation factor IF-3.